Consider the following 490-residue polypeptide: MTKVCPEIEGTLSLSVVPVSVDVSFASDHFPTYKLGPDNQIVEEPKEDEKGPSVKETVEKESELLSDQHKRLSVRDLASKFDKNLAAAVSLANEAKLREVASLEGHVMLKKLRDALEYMRGRTDGQNKQDVETAISMVEALAVKLTQNEGELIQEKFEVKKLGNFLKQTSEDAKKLVNQEKSFSCAEIETARAVVLRLGEAFEEQERISEASRAQGPDVEKLVEEVQEARQIKRMHHPTKVMGMQHELHGLRNRIQEKYMNSVKLHKEIAIIKRVEESKSCPFVLEGKQSLGSCLRIRVNAQDNAPDLSNCSIQWYRAACETSRREAISGAIQSMYAPEPFDVGRILQADILSNGQKFTVTTDDPVDPDSGLPSRVESLMRKSNSEFSVVISQMNGQDYASRSHVFTVGKTRIKLSRGWITKARELYSTSMQLCGVRGNIKAPTKAVFWQPRKSLTFILTFESEHERNAAIALARKYAFDCSVTLLGPDD.

Belongs to the SCAB family. Expressed in roots, stems, leaves, siliques and flowers.

It localises to the cytoplasm. Its subcellular location is the cytoskeleton. Its function is as follows. Probable plant-specific actin binding protein that bundles and stabilizes microfilaments (MFs). This Arabidopsis thaliana (Mouse-ear cress) protein is Stomatal closure-related actin-binding protein 3.